We begin with the raw amino-acid sequence, 709 residues long: FACT complex subunit SSRP1 (709 aa).

Ala-2 is modified (N-acetylalanine). Lys-90 participates in a covalent cross-link: Glycyl lysine isopeptide (Lys-Gly) (interchain with G-Cter in SUMO2). Position 170 is a phosphothreonine (Thr-170). An N6-acetyllysine modification is found at Lys-233. Residues Lys-296 and Lys-364 each participate in a glycyl lysine isopeptide (Lys-Gly) (interchain with G-Cter in SUMO2) cross-link. Lys-413 carries the N6-acetyllysine modification. At Ser-437 the chain carries Phosphoserine. Tyr-441 carries the phosphotyrosine modification. Position 444 is a phosphoserine (Ser-444). Tyr-452 bears the Phosphotyrosine mark. A disordered region spans residues 458 to 709 (EEGKIREENA…SEDSASGSDE (252 aa)). Residues 470–496 (SSDDSGEETDESFNPGEEEEDVAEEFD) show a composition bias toward acidic residues. Residue Ser-471 is modified to Phosphoserine. The span at 497-507 (SNASASSSSNE) shows a compositional bias: low complexity. Ser-510 bears the Phosphoserine; by CK2 mark. Positions 515–533 (KKRKQLKKAKMAKDRKSRK) are enriched in basic residues. Composition is skewed to basic and acidic residues over residues 534–546 (KPVE…DPNA) and 577–624 (LSKK…SSKR). Position 542 is an N6-acetyllysine (Lys-542). Residues 547–615 (PKRPMSAYML…DYEKAMKEYE (69 aa)) constitute a DNA-binding region (HMG box). The segment covering 625 to 634 (DKSKKKKKVK) has biased composition (basic residues). Low complexity predominate over residues 643–659 (PSRGSSSKSSSRQLSES). Residues Ser-657, Ser-659, Ser-667, Ser-668, Ser-671, Ser-672, and Ser-673 each carry the phosphoserine modification. Residue Ser-688 is modified to Phosphoserine; by CK2. Residues 696 to 709 (TPPSSEDSASGSDE) show a composition bias toward polar residues.

Belongs to the SSRP1 family. As to quaternary structure, interacts with MYOG (via C-terminal region). Component of the FACT complex, a stable heterodimer of SSRP1 and SUPT16H. Also a component of a CK2-SPT16-SSRP1 complex which forms following UV irradiation, composed of SSRP1, SUPT16H, CSNK2A1, CSNK2A2 and CSNK2B. Binds to histone H3-H4 tetramers, but not to intact nucleosomes. Identified in a centromere complex containing histones H2A, H2B and H4, and at least CENPA, CENPB, CENPC, CENPT, CENPN, HJURP, SUPT16H, SSRP1 and RSF1. Interacts with isoform gamma of TP63. Interacts with FYTTD1/UIF. Interacts with SRF. Interacts with NEK9. (Microbial infection) Interacts with Herpes simplex virus 1 (HHV-1) protein ICP22; this interaction relocalizes the FACT complex to viral genomes in infected cells. Phosphorylated by CK2 following UV but not gamma irradiation. Phosphorylation inhibits its DNA-binding activity. Post-translationally, ubiquitinated. Polyubiquitinated following caspase cleavage resulting in degradation of the N-terminal ubiquitinated part of the cleaved protein. In terms of processing, sumoylated.

It localises to the nucleus. The protein resides in the nucleolus. The protein localises to the chromosome. In terms of biological role, component of the FACT complex, a general chromatin factor that acts to reorganize nucleosomes. The FACT complex is involved in multiple processes that require DNA as a template such as mRNA elongation, DNA replication and DNA repair. During transcription elongation the FACT complex acts as a histone chaperone that both destabilizes and restores nucleosomal structure. It facilitates the passage of RNA polymerase II and transcription by promoting the dissociation of one histone H2A-H2B dimer from the nucleosome, then subsequently promotes the reestablishment of the nucleosome following the passage of RNA polymerase II. The FACT complex is probably also involved in phosphorylation of 'Ser-392' of p53/TP53 via its association with CK2 (casein kinase II). Binds specifically to double-stranded DNA and at low levels to DNA modified by the antitumor agent cisplatin. May potentiate cisplatin-induced cell death by blocking replication and repair of modified DNA. Also acts as a transcriptional coactivator for p63/TP63. The chain is FACT complex subunit SSRP1 (SSRP1) from Homo sapiens (Human).